The following is a 32-amino-acid chain: Beta-hexosaminidase (32 aa).

Residues 1-32 (GKSSSRPLGDATLGDLDFDIEVTQDYWDDLAR) form the GH18 domain. Glu-21 (proton donor) is an active-site residue.

It belongs to the glycosyl hydrolase 18 family. Chitinase class II subfamily.

The enzyme catalyses Hydrolysis of terminal non-reducing N-acetyl-D-hexosamine residues in N-acetyl-beta-D-hexosaminides.. Its activity is regulated as follows. Activity is decreased by HgCl(2) and maltose. Activity is stimulated by Na(2)SeO(4), BaCl(2), MgCl(2), chondroitin 6-sulfate and phenylmethylsulfonyl fluoride. In terms of biological role, preferentially hydrolyzes pNP-GlcNAc, hydrolyzes pNP-GalNAc to a lesser extent. The chain is Beta-hexosaminidase from Palythoa caribaeorum (White encrusting zoanthid coral).